The primary structure comprises 204 residues: Small ribosomal subunit protein uS4 (204 aa).

Residues 92–156 (RRLDALVLRS…SKVPFQVARE (65 aa)) enclose the S4 RNA-binding domain.

Belongs to the universal ribosomal protein uS4 family. As to quaternary structure, part of the 30S ribosomal subunit. Contacts protein S5. The interaction surface between S4 and S5 is involved in control of translational fidelity.

In terms of biological role, one of the primary rRNA binding proteins, it binds directly to 16S rRNA where it nucleates assembly of the body of the 30S subunit. Functionally, with S5 and S12 plays an important role in translational accuracy. This chain is Small ribosomal subunit protein uS4, found in Streptomyces griseus subsp. griseus (strain JCM 4626 / CBS 651.72 / NBRC 13350 / KCC S-0626 / ISP 5235).